The chain runs to 660 residues: tRNA 5-methylaminomethyl-2-thiouridine biosynthesis bifunctional protein MnmC (660 aa).

Residues 1–241 (MNDHPAQDAF…KREILRGHLQ (241 aa)) form a tRNA (mnm(5)s(2)U34)-methyltransferase region. The FAD-dependent cmnm(5)s(2)U34 oxidoreductase stretch occupies residues 268-660 (IGAGLAGCAT…FLLRKLIRGT (393 aa)).

This sequence in the N-terminal section; belongs to the methyltransferase superfamily. tRNA (mnm(5)s(2)U34)-methyltransferase family. In the C-terminal section; belongs to the DAO family. The cofactor is FAD.

Its subcellular location is the cytoplasm. It carries out the reaction 5-aminomethyl-2-thiouridine(34) in tRNA + S-adenosyl-L-methionine = 5-methylaminomethyl-2-thiouridine(34) in tRNA + S-adenosyl-L-homocysteine + H(+). Catalyzes the last two steps in the biosynthesis of 5-methylaminomethyl-2-thiouridine (mnm(5)s(2)U) at the wobble position (U34) in tRNA. Catalyzes the FAD-dependent demodification of cmnm(5)s(2)U34 to nm(5)s(2)U34, followed by the transfer of a methyl group from S-adenosyl-L-methionine to nm(5)s(2)U34, to form mnm(5)s(2)U34. The protein is tRNA 5-methylaminomethyl-2-thiouridine biosynthesis bifunctional protein MnmC of Stutzerimonas stutzeri (strain A1501) (Pseudomonas stutzeri).